The primary structure comprises 403 residues: L-alanine/L-glutamate racemase (403 aa).

Residues 62–64, 92–93, and 209–211 contribute to the pyridoxal 5'-phosphate site; these read YSN, GL, and AVT. Lys-212 bears the N6-(pyridoxal phosphate)lysine mark.

Belongs to the trans-sulfuration enzymes family. Homotetramer; dimer of active dimers. Pyridoxal 5'-phosphate serves as cofactor.

It catalyses the reaction L-alanine = D-alanine. It carries out the reaction L-glutamate = D-glutamate. The catalysed reaction is L,L-cystathionine + H2O = L-homocysteine + pyruvate + NH4(+). It participates in cell wall biogenesis; peptidoglycan biosynthesis. Catalyzes the racemization of L-alanine to D-alanine, and of L-glutamate to D-glutamate. The activity is low, but likely physiological since W.pipientis wMel lacks canonical alr and murI genes, while D-alanine and D-glutamate are essential components of peptidoglycan. Also displays a vestigial cystathionine beta-lyase (CBL) activity, cleaving cystathionine to homocysteine and pyruvate; however, this reaction seems not to be physiologically relevant since the only met gene in the genome of this obligately intracellular parasitic bacterium is metC, demonstrating that it is a methionine auxotroph. The chain is L-alanine/L-glutamate racemase from Wolbachia pipientis wMel.